The primary structure comprises 101 residues: NADH-quinone oxidoreductase subunit K (101 aa).

3 helical membrane-spanning segments follow: residues 4–24 (LSHY…GIFL), 30–50 (IILL…FVAF), and 61–81 (IFVF…LAIL).

This sequence belongs to the complex I subunit 4L family. NDH-1 is composed of 14 different subunits. Subunits NuoA, H, J, K, L, M, N constitute the membrane sector of the complex.

Its subcellular location is the cell inner membrane. The catalysed reaction is a quinone + NADH + 5 H(+)(in) = a quinol + NAD(+) + 4 H(+)(out). Functionally, NDH-1 shuttles electrons from NADH, via FMN and iron-sulfur (Fe-S) centers, to quinones in the respiratory chain. The immediate electron acceptor for the enzyme in this species is believed to be ubiquinone. Couples the redox reaction to proton translocation (for every two electrons transferred, four hydrogen ions are translocated across the cytoplasmic membrane), and thus conserves the redox energy in a proton gradient. The protein is NADH-quinone oxidoreductase subunit K of Nitrosomonas europaea (strain ATCC 19718 / CIP 103999 / KCTC 2705 / NBRC 14298).